A 1057-amino-acid polypeptide reads, in one-letter code: Atrial natriuretic peptide receptor 1 (1057 aa).

A signal peptide spans 1–28; sequence MPGSRRVRPRLRALLLLPPLLLLRSGHA. The Extracellular segment spans residues 29 to 469; it reads SDLTVAVVLP…CNQDHFSTLE (441 aa). Residue asparagine 41 is glycosylated (N-linked (GlcNAc...) asparagine). Chloride-binding residues include serine 81, glycine 113, and cysteine 114. Cystine bridges form between cysteine 88–cysteine 114 and cysteine 192–cysteine 241. Asparagine 208, asparagine 334, asparagine 375, asparagine 382, and asparagine 423 each carry an N-linked (GlcNAc...) asparagine glycan. An intrachain disulfide couples cysteine 451 to cysteine 460. A helical membrane pass occupies residues 470–490; sequence VLALVGSLSLVSFLIVSFFIY. Residues 491–1057 are Cytoplasmic-facing; sequence RKMQLEKELV…LGERGCSTRG (567 aa). Phosphoserine occurs at positions 515 and 525. The 278-residue stretch at 524–801 folds into the Protein kinase domain; sequence GSRLTLSGRG…QIRLALRKFN (278 aa). Threonine 528 is modified (phosphothreonine). Residues serine 530, serine 534, and serine 538 each carry the phosphoserine modification. Phosphothreonine is present on threonine 541. The Guanylate cyclase domain occupies 872–1002; that stretch reads TIYFSDIVGF…DTVNTASRME (131 aa).

It belongs to the adenylyl cyclase class-4/guanylyl cyclase family. Homodimer. Phosphorylation of the protein kinase-like domain is required for full activation by ANP.

The protein resides in the membrane. The enzyme catalyses GTP = 3',5'-cyclic GMP + diphosphate. In terms of biological role, receptor for the atrial natriuretic peptide NPPA/ANP and the brain natriuretic peptide NPPB/BNP which are potent vasoactive hormones playing a key role in cardiovascular homeostasis. Plays an essential role in the regulation of endothelial cell senescence and vascular aging. Upon activation by ANP or BNP, stimulates the production of cyclic guanosine monophosphate (cGMP) that promotes vascular tone and volume homeostasis by activation of protein kinase cGMP-dependent 1/PRKG1 and subsequently PRKAA1, thereby controlling blood pressure and maintaining cardiovascular homeostasis. The polypeptide is Atrial natriuretic peptide receptor 1 (Npr1) (Mus musculus (Mouse)).